The chain runs to 184 residues: UPF0301 protein RSKD131_2391 (184 aa).

The protein belongs to the UPF0301 (AlgH) family.

The polypeptide is UPF0301 protein RSKD131_2391 (Cereibacter sphaeroides (strain KD131 / KCTC 12085) (Rhodobacter sphaeroides)).